The chain runs to 148 residues: MNLSNLKPAEGSTKTRKRIGRGPGSGLGGTSTRGHKGAKSRSGYSKKIGFEGGQMPLQRRVPKFGFKNINRIEYKAINLETIQKLAEAKKLEKVGVNDFIEAGFISSSQLVKVLGNGTLTAKLSVEAHAFSKSAVAAIEAAGGNVVKL.

A disordered region spans residues methionine 1–phenylalanine 50. The span at arginine 21–serine 31 shows a compositional bias: gly residues.

The protein belongs to the universal ribosomal protein uL15 family. As to quaternary structure, part of the 50S ribosomal subunit.

Its function is as follows. Binds to the 23S rRNA. The chain is Large ribosomal subunit protein uL15 from Bacteroides fragilis (strain ATCC 25285 / DSM 2151 / CCUG 4856 / JCM 11019 / LMG 10263 / NCTC 9343 / Onslow / VPI 2553 / EN-2).